Consider the following 431-residue polypeptide: Adenylosuccinate synthetase (431 aa).

Residues 12 to 18 and 40 to 42 each bind GTP; these read GDEGKGK and GHT. The Proton acceptor role is filled by Asp13. Residues Asp13 and Gly40 each coordinate Mg(2+). IMP-binding positions include 13 to 16, 38 to 41, Thr128, Arg142, Gln223, Thr238, and Arg301; these read DEGK and NAGH. His41 acts as the Proton donor in catalysis. 297 to 303 is a substrate binding site; that stretch reads TVTGRPR. GTP-binding positions include Arg303, 329–331, and 411–413; these read SID and SVG.

It belongs to the adenylosuccinate synthetase family. In terms of assembly, homodimer. Requires Mg(2+) as cofactor.

It localises to the cytoplasm. The enzyme catalyses IMP + L-aspartate + GTP = N(6)-(1,2-dicarboxyethyl)-AMP + GDP + phosphate + 2 H(+). It functions in the pathway purine metabolism; AMP biosynthesis via de novo pathway; AMP from IMP: step 1/2. Functionally, plays an important role in the de novo pathway of purine nucleotide biosynthesis. Catalyzes the first committed step in the biosynthesis of AMP from IMP. This Lacticaseibacillus casei (strain BL23) (Lactobacillus casei) protein is Adenylosuccinate synthetase.